A 230-amino-acid chain; its full sequence is Ribosome maturation factor RimM (230 aa).

In terms of domain architecture, PRC barrel spans 149-230; that stretch reads ADEFYWVDLI…RVVVDWEADY (82 aa).

This sequence belongs to the RimM family. In terms of assembly, binds ribosomal protein uS19.

It is found in the cytoplasm. An accessory protein needed during the final step in the assembly of 30S ribosomal subunit, possibly for assembly of the head region. Essential for efficient processing of 16S rRNA. May be needed both before and after RbfA during the maturation of 16S rRNA. It has affinity for free ribosomal 30S subunits but not for 70S ribosomes. The polypeptide is Ribosome maturation factor RimM (Burkholderia mallei (strain NCTC 10229)).